Reading from the N-terminus, the 623-residue chain is Glutathione import ATP-binding protein GsiA (623 aa).

ABC transporter domains are found at residues 15–269 (VENL…RALL) and 314–564 (LRVR…RKLL). Residues 49 to 56 (GESGSGKS) and 357 to 364 (GESGSGKS) each bind ATP.

Belongs to the ABC transporter superfamily. Glutathione importer (TC 3.A.1.5.11) family. The complex is composed of two ATP-binding proteins (GsiA), two transmembrane proteins (GsiC and GsiD) and a solute-binding protein (GsiB).

It is found in the cell inner membrane. It carries out the reaction glutathione(out) + ATP + H2O = glutathione(in) + ADP + phosphate + H(+). Part of the ABC transporter complex GsiABCD involved in glutathione import. Responsible for energy coupling to the transport system. The protein is Glutathione import ATP-binding protein GsiA of Shigella dysenteriae serotype 1 (strain Sd197).